A 437-amino-acid chain; its full sequence is GTPase Obg (437 aa).

The Obg domain maps to 2–160 (SMFLDTAKIK…RNLELELKVL (159 aa)). The 178-residue stretch at 161 to 338 (ADVGLVGFPS…LLEATAELLE (178 aa)) folds into the OBG-type G domain. GTP is bound by residues 167-174 (GFPSVGKS), 192-196 (FTTIV), 214-217 (DLPG), 284-287 (NKMD), and 319-321 (SGI). Mg(2+) is bound by residues Ser174 and Thr194. The OCT domain occupies 359-437 (GFNPDEPEFA…IGKFEFEFVD (79 aa)).

This sequence belongs to the TRAFAC class OBG-HflX-like GTPase superfamily. OBG GTPase family. In terms of assembly, monomer. Mg(2+) serves as cofactor.

The protein resides in the cytoplasm. Functionally, an essential GTPase which binds GTP, GDP and possibly (p)ppGpp with moderate affinity, with high nucleotide exchange rates and a fairly low GTP hydrolysis rate. Plays a role in control of the cell cycle, stress response, ribosome biogenesis and in those bacteria that undergo differentiation, in morphogenesis control. This chain is GTPase Obg, found in Streptococcus suis (strain 05ZYH33).